We begin with the raw amino-acid sequence, 1166 residues long: Serine-aspartate repeat-containing protein E (1166 aa).

An N-terminal signal peptide occupies residues M1–A52. Residues F23 to S34 carry the YSIRK-G/S signaling motif motif. A ligand binding A region region spans residues A53 to K606. The interval E54–P253 is disordered. The segment covering A61–V75 has biased composition (basic and acidic residues). The span at E77 to N90 shows a compositional bias: low complexity. Residues I92–S108 are compositionally biased toward basic and acidic residues. Over residues N118–Q129 the composition is skewed to polar residues. Residues N130 to T145 show a composition bias toward basic and acidic residues. Low complexity predominate over residues T166 to E178. Residues I179–T212 show a composition bias toward polar residues. Basic and acidic residues predominate over residues S221–T246. CNA-B domains follow at residues L607–P719, K720–P829, and K830–T940. The tract at residues V904–N1141 is disordered. Acidic residues-rich tracts occupy residues T908–E918 and Y935–S1105. The LPXTG sorting signal motif lies at L1129–G1133. Pentaglycyl murein peptidoglycan amidated threonine is present on T1132. A propeptide spans G1133 to K1166 (removed by sortase).

This sequence belongs to the serine-aspartate repeat-containing protein (SDr) family. Interacts with host complement factor H/CFAH (via C-terminus). Interacts with host complement regulator C4BPA.

Its subcellular location is the secreted. It localises to the cell wall. Functionally, cell surface-associated calcium-binding protein which plays an important role in adhesion and pathogenesis. Contributes to the resistance to killing by innate immune components in blood and thus attenuates bacterial clearance by interacting with host complement factor H/CFAH and modulating its activity. Also inhibits bacterial opsonization and killing by interacting with host complement regulator C4BPA and thus inhibiting classical complement pathway activation. The sequence is that of Serine-aspartate repeat-containing protein E (sdrE) from Staphylococcus aureus (strain COL).